A 159-amino-acid polypeptide reads, in one-letter code: MRCPFCRHDDTQVVDSRVSEDGAAIRRRRRCSACDKRFTTYERVELSLPFVVKKDGSRTEFDRRKIVASMQLALRKRPVAADAIDAAVARIEYQLLATGEREVRSEKLGELVMNELRGLDTIAYVRFASVYRRFEDVSEFADVIEEFRRASPAKTPRKR.

A zinc finger spans residues 3–34 (CPFCRHDDTQVVDSRVSEDGAAIRRRRRCSAC). Residues 49 to 139 (PFVVKKDGSR…VYRRFEDVSE (91 aa)) enclose the ATP-cone domain.

It belongs to the NrdR family. Zn(2+) is required as a cofactor.

Negatively regulates transcription of bacterial ribonucleotide reductase nrd genes and operons by binding to NrdR-boxes. In Burkholderia cenocepacia (strain ATCC BAA-245 / DSM 16553 / LMG 16656 / NCTC 13227 / J2315 / CF5610) (Burkholderia cepacia (strain J2315)), this protein is Transcriptional repressor NrdR.